Consider the following 147-residue polypeptide: Transthyretin (147 aa).

The first 20 residues, 1 to 20, serve as a signal peptide directing secretion; that stretch reads MASLRLFLLCLAGLVFVSEA. Position 30 is a sulfocysteine (Cys-30). An L-thyroxine-binding site is contributed by Lys-35. Glu-62 carries the post-translational modification 4-carboxyglutamate. Ser-72 bears the Phosphoserine mark. Glu-74 provides a ligand contact to L-thyroxine. Asn-118 carries N-linked (GlcNAc...) asparagine glycosylation. An L-thyroxine-binding site is contributed by Ser-137.

This sequence belongs to the transthyretin family. In terms of assembly, homotetramer. Dimer of dimers. In the homotetramer, subunits assemble around a central channel that can accommodate two ligand molecules. Interacts with RBP4. In terms of processing, sulfonation of the reactive cysteine Cys-30 enhances the stability of the native conformation of TTR, avoiding misassembly of the protein leading to amyloid formation. As to expression, detected in plasma (at protein level). Detected in liver.

Its subcellular location is the secreted. Functionally, thyroid hormone-binding protein. Probably transports thyroxine from the bloodstream to the brain. The sequence is that of Transthyretin (Ttr) from Mus musculus (Mouse).